Consider the following 140-residue polypeptide: Translation initiation factor 2 subunit beta (140 aa).

It belongs to the eIF-2-beta/eIF-5 family. As to quaternary structure, heterotrimer composed of an alpha, a beta and a gamma chain.

In terms of biological role, eIF-2 functions in the early steps of protein synthesis by forming a ternary complex with GTP and initiator tRNA. The protein is Translation initiation factor 2 subunit beta of Metallosphaera sedula (strain ATCC 51363 / DSM 5348 / JCM 9185 / NBRC 15509 / TH2).